Here is a 268-residue protein sequence, read N- to C-terminus: 3-deoxy-manno-octulosonate cytidylyltransferase (268 aa).

It belongs to the KdsB family.

Its subcellular location is the cytoplasm. The catalysed reaction is 3-deoxy-alpha-D-manno-oct-2-ulosonate + CTP = CMP-3-deoxy-beta-D-manno-octulosonate + diphosphate. It participates in nucleotide-sugar biosynthesis; CMP-3-deoxy-D-manno-octulosonate biosynthesis; CMP-3-deoxy-D-manno-octulosonate from 3-deoxy-D-manno-octulosonate and CTP: step 1/1. It functions in the pathway bacterial outer membrane biogenesis; lipopolysaccharide biosynthesis. Functionally, activates KDO (a required 8-carbon sugar) for incorporation into bacterial lipopolysaccharide in Gram-negative bacteria. This is 3-deoxy-manno-octulosonate cytidylyltransferase from Psychrobacter cryohalolentis (strain ATCC BAA-1226 / DSM 17306 / VKM B-2378 / K5).